A 3748-amino-acid polypeptide reads, in one-letter code: Intermembrane lipid transfer protein VPS13C (3748 aa).

The 113-residue stretch at 3 to 115 folds into the Chorein N-terminal domain; sequence LESVVADLLN…SLQDIKQKEL (113 aa). Serine 132 is modified (phosphoserine). At threonine 613 the chain carries Phosphothreonine. Phosphoserine is present on serine 618. A Phosphothreonine modification is found at threonine 623. A phosphoserine mark is found at serine 736, serine 841, serine 871, and serine 873. Positions 876-882 match the FFAT motif; it reads EFFDAED. Phosphothreonine is present on threonine 1968. A phosphoserine mark is found at serine 1974 and serine 2442. The required for late endosome/lysosome localization stretch occupies residues 2410 to 3304; sequence DYSLKDRAPF…IQQDIDALNT (895 aa). The SHR-BD domain occupies 2760 to 3012; that stretch reads ELSVFSPYWL…LFAWADPTGI (253 aa). Residues 3305 to 3748 form a required for lipid droplet localization region; that stretch reads ELMESSMTDM…VKLLRPQGPS (444 aa). Omega-N-methylarginine is present on residues arginine 3514 and arginine 3521. Lysine 3533 is subject to N6-acetyllysine.

It belongs to the VPS13 family.

It is found in the mitochondrion outer membrane. Its subcellular location is the lipid droplet. The protein localises to the endoplasmic reticulum membrane. The protein resides in the lysosome membrane. It localises to the late endosome membrane. Functionally, mediates the transfer of lipids between membranes at organelle contact sites. Necessary for proper mitochondrial function and maintenance of mitochondrial transmembrane potential. Involved in the regulation of PINK1/PRKN-mediated mitophagy in response to mitochondrial depolarization. This Mus musculus (Mouse) protein is Intermembrane lipid transfer protein VPS13C.